The chain runs to 700 residues: E3 ubiquitin-protein ligase SspH1 (700 aa).

Residues 1–395 form an interaction with target proteins region; that stretch reads MFNIRNTQPS…HSGIRIHFDM (395 aa). LRR repeat units lie at residues 217–238, 239–257, 258–279, 280–297, 298–319, 320–337, 338–360, and 361–381; these read HITT…PEGL, RELE…SLPQ, GLQK…PPGL, GDLA…EMPP, ALRE…PSGL, QKLW…EMSP, GLQE…TGLS, and SAAR…QALR. Residues 396–403 are linker; it reads AGPSVPRE. Positions 404-700 are E3 ubiquitin-protein ligase catalytic domain; the sequence is ARALHLAVAD…SYLTARWRLN (297 aa). The NEL domain occupies 406-700; that stretch reads ALHLAVADWL…SYLTARWRLN (295 aa). Catalysis depends on cysteine 492, which acts as the Glycyl thioester intermediate.

The protein belongs to the LRR-containing bacterial E3 ligase family. As to quaternary structure, interacts (via leucine-rich repeat region) with host PKN1 (via the second REM repeat). Ubiquitinated in the presence of host E1 ubiquitin-activating enzyme, E2 ubiquitin-conjugating enzyme and ubiquitin.

Its subcellular location is the secreted. The protein resides in the host cytoplasm. It is found in the host nucleus. The enzyme catalyses S-ubiquitinyl-[E2 ubiquitin-conjugating enzyme]-L-cysteine + [acceptor protein]-L-lysine = [E2 ubiquitin-conjugating enzyme]-L-cysteine + N(6)-ubiquitinyl-[acceptor protein]-L-lysine.. With respect to regulation, exists in an autoinhibited state in the absence of substrate protein, due to interactions of the leucine-rich repeat domain with the catalytic domain. Is activated upon binding to a substrate protein. Its function is as follows. Effector proteins function to alter host cell physiology and promote bacterial survival in host tissues. This protein is an E3 ubiquitin-protein ligase that interferes with the host's ubiquitination pathway and targets host proteins for proteasomal degradation. Can ubiquitinate ubiquitin, giving rise to polyubiquitin chains (in vitro). Polyubiquitinates host PKN1, leading to its proteasomal degradation. Down-modulates production of host pro-inflammatory cytokines by inhibiting NF-kappa-B-dependent gene expression; this depends only partially on its E3 ubiquitin-protein ligase activity. The protein is E3 ubiquitin-protein ligase SspH1 (sspH1) of Salmonella typhimurium (strain 14028s / SGSC 2262).